The sequence spans 429 residues: Glutamate-1-semialdehyde 2,1-aminomutase (429 aa).

Lysine 265 is subject to N6-(pyridoxal phosphate)lysine.

The protein belongs to the class-III pyridoxal-phosphate-dependent aminotransferase family. HemL subfamily. Homodimer. Pyridoxal 5'-phosphate serves as cofactor.

The protein resides in the cytoplasm. The enzyme catalyses (S)-4-amino-5-oxopentanoate = 5-aminolevulinate. Its pathway is porphyrin-containing compound metabolism; protoporphyrin-IX biosynthesis; 5-aminolevulinate from L-glutamyl-tRNA(Glu): step 2/2. This Chromohalobacter salexigens (strain ATCC BAA-138 / DSM 3043 / CIP 106854 / NCIMB 13768 / 1H11) protein is Glutamate-1-semialdehyde 2,1-aminomutase.